We begin with the raw amino-acid sequence, 423 residues long: Lysosomal acid phosphatase (423 aa).

Residues 1–30 form the signal peptide; it reads MAGRQSGWSQAALLQFLLGMCLMVMPPIQA. Residues 31 to 380 lie on the Lumenal side of the membrane; it reads RSLRFVTLLY…QLASDTADTE (350 aa). His-42 (nucleophile) is an active-site residue. N-linked (GlcNAc...) asparagine glycans are attached at residues Asn-92, Asn-133, Asn-167, Asn-177, Asn-191, Asn-197, and Asn-267. Cystine bridges form between Cys-159/Cys-370, Cys-212/Cys-310, and Cys-345/Cys-349. Asp-287 functions as the Proton donor in the catalytic mechanism. Residues Asn-322 and Asn-331 are each glycosylated (N-linked (GlcNAc...) asparagine). The chain crosses the membrane as a helical span at residues 381 to 401; sequence VIVALAVCGSILFLLIVLLLT. Residues 402 to 423 are Cytoplasmic-facing; sequence VLFRMQAQPPGYHHVADREDHA.

It belongs to the histidine acid phosphatase family. In terms of processing, the membrane-bound form is converted to the soluble form by sequential proteolytic processing. First, the C-terminal cytoplasmic tail is removed. Cleavage by a lysosomal protease releases the soluble form in the lysosome lumen.

The protein localises to the lysosome membrane. The protein resides in the lysosome lumen. The enzyme catalyses a phosphate monoester + H2O = an alcohol + phosphate. In Rattus norvegicus (Rat), this protein is Lysosomal acid phosphatase (Acp2).